The primary structure comprises 423 residues: Putative competence-damage inducible protein (423 aa).

The protein belongs to the CinA family.

The protein is Putative competence-damage inducible protein of Streptococcus pyogenes serotype M3 (strain ATCC BAA-595 / MGAS315).